The following is a 511-amino-acid chain: Maturase K (511 aa).

This sequence belongs to the intron maturase 2 family. MatK subfamily.

It is found in the plastid. The protein localises to the chloroplast. Functionally, usually encoded in the trnK tRNA gene intron. Probably assists in splicing its own and other chloroplast group II introns. This chain is Maturase K, found in Psathyrostachys juncea (Russian wildrye).